The primary structure comprises 203 residues: Twist-related protein 1 (203 aa).

Over residues 1–18 the composition is skewed to low complexity; sequence MMQDVSSSPVSPADDSLS. Residues 1 to 106 are disordered; sequence MMQDVSSSPV…GGGSPQSYEE (106 aa). A compositionally biased stretch (basic residues) spans 34–43; it reads RGGRKRRSSS. Composition is skewed to gly residues over residues 47 to 66 and 81 to 100; these read AGGG…GGDE and GCGG…GGGS. Residues 109–160 enclose the bHLH domain; the sequence is TQRVMANVRERQRTQSLNEAFAALRKIIPTLPSDKLSKIQTLKLAARYIDFL. The tract at residues 162–192 is sufficient for transactivation activity; sequence QVLQSDELDSKMASCSYVAHERLSYAFSVWR.

Efficient DNA binding requires dimerization with another bHLH protein. Homodimer or heterodimer with E proteins such as TCF3. ID1 binds preferentially to TCF3 but does not interact efficiently with TWIST1 so ID1 levels control the amount of TCF3 available to dimerize with TWIST and thus determine the type of dimer formed.

Its subcellular location is the nucleus. In terms of biological role, acts as a transcriptional regulator. Inhibits myogenesis by sequestrating E proteins, inhibiting trans-activation by MEF2, and inhibiting DNA-binding by MYOD1 through physical interaction. This interaction probably involves the basic domains of both proteins. Also represses expression of pro-inflammatory cytokines such as TNFA and IL1B. Regulates cranial suture patterning and fusion. Activates transcription as a heterodimer with E proteins. Regulates gene expression differentially, depending on dimer composition. Homodimers induce expression of FGFR2 and POSTN while heterodimers repress FGFR2 and POSTN expression and induce THBS1 expression. Heterodimerization is also required for osteoblast differentiation. Represses the activity of the circadian transcriptional activator: NPAS2-BMAL1 heterodimer. The sequence is that of Twist-related protein 1 (TWIST1) from Pongo pygmaeus (Bornean orangutan).